Here is a 1853-residue protein sequence, read N- to C-terminus: MALVGVDFQAPLRTVCRVQFGILGPEEIKRMSVAHVEFPEVYENGKPKMGGLMDPRQGVIDRRGRCMTCAGNLTDCPGHFGHLELAKPVFHIGFLTKSLKILRCVCFYCGRLLIDKTNPRVMDILKKTSGNPKKRLALIYDLCKSKSVCEGAAEKEDGLPDDMDDPMNEGKKVPAGCGRYQPSYRRVGIDINAEWKKNVNEDTQERKIMLTAERVLEVFKQITDEDILVIGMDPQFARPEWMICTVLPVPPLAVRPAVVTFGSAKNQDDLTHKLSDIIKTNQQLQRNEANGAAAHVLTDDVRLLQYHVATLVDNCIPGLPTATQKGGRPLKSIKQRLKGKEGRIRGNLMGKRVDFSARTVITADPNLPIDTVGVPRTIAQNLTFPEIVTPFNVDKLQELVNRGDTQYPGAKYIIRENGARVDLRYHPRAADLHLQPGYRVERHMKDGDIIVFNRQPTLHKMSMMGHRVKILPWSTFRMNLSVTSPYNADFDGDEMNLHLPQSLETRAEIEEIAMVPRQLITPQANKPVMGIVQDTLCAVRMMTKRDIFIDWPFMMDLLMYLPTWDGKVPQPAILKPKPLWTGKQVFSLIIPGNVNVLRTHSTHPDSEDSGPYKWISPGDTKVLIEHGELLSGIVCSKTVGKSAGNLLHVVALELGHEIAANFYSHIQTVINAWLLREGHTIGIGDTIADQSTYLDIQNTIRKAKQDVVDVIEKAHNDDLEPTPGNTLRQTFENKVNQILNDARDRTGSSAQKSLSEFNNFKSMVVSGSKGSKINISQVIACVGQQNVEGKRIPFGFRHRTLPHFIKDDYGPESKGFVENSYLAGLTPSEFFFHAMGGREGLIDTAVKTAETGYIQRRLIKAMESVMVNYDGTVRNSLAQMVQLRYGEDGLDGMWVENQNMPTMKPNNAVFERDFRMDLTDNKFLRKNYSEDVVREIQEAQDGISLVESEWSQLEEDRRLLRKIFPRGDAKIVLPCNLQRLIWNAQKIFKVDLRKPVNLSPLHVINGVRELSKKLIIVSGNDEISKQAQYNATLLMNILLRSTLCTKKMCTSAKLNTEAFDWLLGEIETRFQQAIAQPGEMVGALAAQSLGEPATQMTLNTFHYAGVSAKNVTLGVPRLKEIINVSKQLKTPSLTVFLTGAAAKDPEKAKDVLCKLEHTTLKKVTCNTAIYYDPDPKNTVIAEDEEWVSIFYEMPDHDLTRTSPWLLRIELDRKRMVDKKLTMEMIADRIHGGFGQDVHTIYTDDNAEKLVFRLRIAGEDKGAEGQEEQVDKMEDDVFLRCIEANMLSDLTLQGIPAISKVYMNQPNTDDKKRIIITPEGGFKAVADWILETDGTALLRVLSERQIDPVRTTSNDICEIFEVLGIEAVRKSIEKEMDNVISFDGSYVNYRHLALLCDVMTAKGHLMAITRHGINRQEVGALMRCSFEETVDILMEASVHAEVDPVKGVSENIMLGQLARCGTGCFDLVLDVEKCKHGMEIPQNVVMGAGIYGGGFAGSPSREFSPAHSPWNSGVTPNYSGPWSPTGGMSPSAGFSPAGNLDGGASPFNEGGWSPASPGDPLGALSPRTPAYGGMSPGVYSPASPGFSMTSPHYSPTSPSYSPTSPAHHGQSPVSPSYSPTSPSYSPTSPSYSPTSPSYSPTSPSYSPTSPSYSPTSPSYSPTSPSYSPTSPSYSPSSPRYSPTSPTYSPTSPTYSPTSPTYSPTSPTYSPTSPSYEGYSPSSPKYSPSSPTYSPTSPSYSPTSPQYSPTSPQYSPSSPTYTPSSPTYNPTSPRAFSSPQYSPTSPTYSPTSPSYTPSSPQYSPTSPTYTPSPADQPGTSNQYSPSSPTYSPSSPTYSPASPSYSPSSPTYDPQN.

Residues C66, C69, C76, H79, C106, C109, C149, and C177 each coordinate Zn(2+). Positions 256-268 (PAVVTFGSAKNQD) are lid loop. Positions 314-331 (NCIPGLPTATQKGGRPLK) are rudder loop. Mg(2+)-binding residues include D489, D491, and D493. A bridging helix region spans residues 827-839 (PSEFFFHAMGGRE). K1260 is covalently cross-linked (Glycyl lysine isopeptide (Lys-Gly) (interchain with G-Cter in ubiquitin)). Disordered stretches follow at residues 1520-1568 (PWSP…PRTP) and 1589-1853 (SPHY…DPQN). Low complexity-rich tracts occupy residues 1589–1811 (SPHY…TPSP) and 1821–1853 (YSPS…DPQN). A run of 26 repeats spans residues 1592–1598 (YSPTSPS), 1599–1605 (YSPTSPA), 1616–1622 (YSPTSPS), 1623–1629 (YSPTSPS), 1630–1636 (YSPTSPS), 1637–1643 (YSPTSPS), 1644–1650 (YSPTSPS), 1651–1657 (YSPTSPS), 1658–1664 (YSPTSPS), 1665–1671 (YSPTSPS), 1679–1685 (YSPTSPT), 1686–1692 (YSPTSPT), 1693–1699 (YSPTSPT), 1700–1706 (YSPTSPT), 1707–1713 (YSPTSPS), 1717–1723 (YSPSSPK), 1724–1730 (YSPSSPT), 1731–1737 (YSPTSPS), 1752–1758 (YSPSSPT), 1759–1765 (YTPSSPT), 1779–1785 (YSPTSPT), 1786–1792 (YSPTSPS), 1800–1806 (YSPTSPT), 1821–1827 (YSPSSPT), 1828–1834 (YSPSSPT), and 1842–1848 (YSPSSPT). A C-terminal domain (CTD); 26 X 7 AA approximate tandem repeats of Y-[ST]-P-[ST]-S-P-[AGKNQRST] region spans residues 1592-1848 (YSPTSPSYSP…SPSYSPSSPT (257 aa)).

Belongs to the RNA polymerase beta' chain family. As to quaternary structure, component of the RNA polymerase II (Pol II) complex consisting of 12 subunits. Interacts with sig-7. The tandem 7 residues repeats in the C-terminal domain (CTD) can be highly phosphorylated. The phosphorylation activates Pol II. Phosphorylation occurs mainly at residues 'Ser-2' and 'Ser-5' of the heptapeptide repeat and starts at the 3- to 4-cell embryonic stage. This phosphorylation also occurs in the early stages of oocyte development and is not detected in oocytes arrested at the meiotic diakinesis stage. In the somatic lineage, phosphorylation at 'Ser-2' is mediated by cdk-12 downstream of cdk-9 whereas in the germline lineage cdk-12 phosphorylates 'Ser-2' independently of cdk-9. Phosphorylation is likely mediated by cdk-7. May be dephosphorylated by fcp-1 in diakinetic oocytes and in 1-cell and 2-cell embryos. Dephosphorylated at 'Ser-5' of the heptapeptide repeat by ssup-72. The phosphorylation state is believed to result from the balanced action of site-specific CTD kinases and phosphatase, and a 'CTD code' that specifies the position of Pol II within the transcription cycle has been proposed. Post-translationally, following transcription stress, the elongating form of RNA polymerase II (RNA pol IIo) is polyubiquitinated via 'Lys-63'-linkages on Lys-1260 at DNA damage sites without leading to degradation: ubiquitination promotes RNA pol IIo backtracking to allow access by the transcription-coupled nucleotide excision repair (TC-NER) machinery. Subsequent DEF1-dependent polyubiquitination by the elongin complex via 'Lys-48'-linkages may lead to proteasome-mediated degradation; presumably at stalled RNA pol II where TC-NER has failed, to halt global transcription and enable 'last resort' DNA repair pathways.

Its subcellular location is the nucleus. The protein localises to the chromosome. It catalyses the reaction RNA(n) + a ribonucleoside 5'-triphosphate = RNA(n+1) + diphosphate. Its function is as follows. DNA-dependent RNA polymerase catalyzes the transcription of DNA into RNA using the four ribonucleoside triphosphates as substrates. Largest and catalytic component of RNA polymerase II which synthesizes mRNA precursors and many functional non-coding RNAs. Forms the polymerase active center together with the second largest subunit. Pol II is the central component of the basal RNA polymerase II transcription machinery. It is composed of mobile elements that move relative to each other. RPB1 is part of the core element with the central large cleft, the clamp element that moves to open and close the cleft and the jaws that are thought to grab the incoming DNA template. At the start of transcription, a single-stranded DNA template strand of the promoter is positioned within the central active site cleft of Pol II. A bridging helix emanates from RPB1 and crosses the cleft near the catalytic site and is thought to promote translocation of Pol II by acting as a ratchet that moves the RNA-DNA hybrid through the active site by switching from straight to bent conformations at each step of nucleotide addition. During transcription elongation, Pol II moves on the template as the transcript elongates. Elongation is influenced by the phosphorylation status of the C-terminal domain (CTD) of Pol II largest subunit (RPB1), which serves as a platform for assembly of factors that regulate transcription initiation, elongation, termination and mRNA processing. Involved in the transcription of several genes including those involved in embryogenesis. This chain is DNA-directed RNA polymerase II subunit RPB1, found in Caenorhabditis briggsae.